Here is a 466-residue protein sequence, read N- to C-terminus: Ribulose bisphosphate carboxylase large chain (466 aa).

N6,N6,N6-trimethyllysine is present on Lys-5. Asn-114 and Thr-164 together coordinate substrate. The active-site Proton acceptor is the Lys-166. Lys-168 is a substrate binding site. Mg(2+) is bound by residues Lys-192, Asp-194, and Glu-195. N6-carboxylysine is present on Lys-192. The active-site Proton acceptor is His-285. The substrate site is built by Arg-286, His-318, and Ser-370.

The protein belongs to the RuBisCO large chain family. Type I subfamily. Heterohexadecamer of 8 large chains and 8 small chains. The cofactor is Mg(2+).

The protein localises to the plastid. The protein resides in the chloroplast. It carries out the reaction 2 (2R)-3-phosphoglycerate + 2 H(+) = D-ribulose 1,5-bisphosphate + CO2 + H2O. It catalyses the reaction D-ribulose 1,5-bisphosphate + O2 = 2-phosphoglycolate + (2R)-3-phosphoglycerate + 2 H(+). Its function is as follows. RuBisCO catalyzes two reactions: the carboxylation of D-ribulose 1,5-bisphosphate, the primary event in carbon dioxide fixation, as well as the oxidative fragmentation of the pentose substrate in the photorespiration process. Both reactions occur simultaneously and in competition at the same active site. The chain is Ribulose bisphosphate carboxylase large chain from Lobelia sp.